The following is a 330-amino-acid chain: PDZ and LIM domain protein 4 (330 aa).

One can recognise a PDZ domain in the interval arginine 8–glutamate 84. 2 disordered regions span residues glutamate 106–alanine 152 and leucine 163–asparagine 182. Over residues glutamine 139–alanine 152 the composition is skewed to polar residues. The 51-residue stretch at cysteine 255–histidine 305 folds into the LIM zinc-binding domain.

In terms of assembly, interacts (via LIM domain) with PTPN13. Interacts (via PDZ domain) with ACTN1.

It is found in the cytoplasm. It localises to the cytoskeleton. Its subcellular location is the cell projection. The protein localises to the dendritic spine. The protein resides in the early endosome membrane. It is found in the recycling endosome membrane. It localises to the nucleus. Its subcellular location is the perinuclear region. The protein localises to the lamellipodium. The protein resides in the synapse. It is found in the synaptosome. In terms of biological role, suppresses SRC activation by recognizing and binding to active SRC and facilitating PTPN13-mediated dephosphorylation of SRC 'Tyr-419' leading to its inactivation. Inactivated SRC dissociates from this protein allowing the initiation of a new SRC inactivation cycle. Involved in reorganization of the actin cytoskeleton. In nonmuscle cells, binds to ACTN1 (alpha-actinin-1), increases the affinity of ACTN1 to F-actin (filamentous actin), and promotes formation of actin stress fibers. Involved in regulation of the synaptic AMPA receptor transport in dendritic spines of hippocampal pyramidal neurons directing the receptors toward an insertion at the postsynaptic membrane. Links endosomal surface-internalized GRIA1-containing AMPA receptors to the alpha-actinin/actin cytoskeleton. Increases AMPA receptor-mediated excitatory postsynaptic currents in neurons. This is PDZ and LIM domain protein 4 (PDLIM4) from Gallus gallus (Chicken).